A 290-amino-acid chain; its full sequence is MMTSNSYWQRLKVAFQYVMPQIYLTQIAGWFAKQKWGKITHFVIKAFAKKYNIDMSIAQKEQFSDYASFNEFFIRPLKENARPINQNPTALCLPADGRISECGHIDDNLLLQAKGHFFSLEDLLAEDKELVETFKNGEFVTTYLSPRDYHRVHMPCDATLRKMIYVPGDLFSVNPFLAQHVPNLFARNERVICVFDTEFGTMVQILVGATITASIGTTWAGVINPPRHNEVKTWTYEGESAVKLLKGQEMGWFQLGSTVINLFQANQVRLADHLSVNEPVRMGEILAYKK.

Active-site charge relay system; for autoendoproteolytic cleavage activity residues include D96, H153, and S257. Catalysis depends on S257, which acts as the Schiff-base intermediate with substrate; via pyruvic acid; for decarboxylase activity. Residue S257 is modified to Pyruvic acid (Ser); by autocatalysis.

Belongs to the phosphatidylserine decarboxylase family. PSD-B subfamily. Prokaryotic type I sub-subfamily. Heterodimer of a large membrane-associated beta subunit and a small pyruvoyl-containing alpha subunit. The cofactor is pyruvate. Is synthesized initially as an inactive proenzyme. Formation of the active enzyme involves a self-maturation process in which the active site pyruvoyl group is generated from an internal serine residue via an autocatalytic post-translational modification. Two non-identical subunits are generated from the proenzyme in this reaction, and the pyruvate is formed at the N-terminus of the alpha chain, which is derived from the carboxyl end of the proenzyme. The autoendoproteolytic cleavage occurs by a canonical serine protease mechanism, in which the side chain hydroxyl group of the serine supplies its oxygen atom to form the C-terminus of the beta chain, while the remainder of the serine residue undergoes an oxidative deamination to produce ammonia and the pyruvoyl prosthetic group on the alpha chain. During this reaction, the Ser that is part of the protease active site of the proenzyme becomes the pyruvoyl prosthetic group, which constitutes an essential element of the active site of the mature decarboxylase.

The protein resides in the cell membrane. It carries out the reaction a 1,2-diacyl-sn-glycero-3-phospho-L-serine + H(+) = a 1,2-diacyl-sn-glycero-3-phosphoethanolamine + CO2. The protein operates within phospholipid metabolism; phosphatidylethanolamine biosynthesis; phosphatidylethanolamine from CDP-diacylglycerol: step 2/2. Catalyzes the formation of phosphatidylethanolamine (PtdEtn) from phosphatidylserine (PtdSer). The polypeptide is Phosphatidylserine decarboxylase proenzyme (Haemophilus influenzae (strain ATCC 51907 / DSM 11121 / KW20 / Rd)).